A 556-amino-acid chain; its full sequence is Membrane protein insertase YidC (556 aa).

The helical transmembrane segment at 7–27 threads the bilayer; it reads ILLVALAVVAYLMVLQWNQDY. 2 disordered regions span residues 35-59 and 126-152; these read ETAQSQPAAPALPDSPSATTEGNAN and SSERTYEAQSGLIGDGPDKASGRPQYS. The span at 36–54 shows a compositional bias: low complexity; sequence TAQSQPAAPALPDSPSATT. The next 4 membrane-spanning stretches (helical) occupy residues 365–385, 435–455, 468–488, and 513–533; these read LLGNWGWSIIVLTIVIKLAFF, LGGCLPILVQMPVFLALYWVL, FWITDLSIKDPYFILPIIMGV, and PIIFTFFFLWFPAGLVLYWVV.

This sequence belongs to the OXA1/ALB3/YidC family. Type 1 subfamily. Interacts with the Sec translocase complex via SecD. Specifically interacts with transmembrane segments of nascent integral membrane proteins during membrane integration.

The protein localises to the cell inner membrane. Its function is as follows. Required for the insertion and/or proper folding and/or complex formation of integral membrane proteins into the membrane. Involved in integration of membrane proteins that insert both dependently and independently of the Sec translocase complex, as well as at least some lipoproteins. Aids folding of multispanning membrane proteins. This chain is Membrane protein insertase YidC, found in Stutzerimonas stutzeri (strain A1501) (Pseudomonas stutzeri).